The following is a 180-amino-acid chain: ATP synthase subunit delta (180 aa).

This sequence belongs to the ATPase delta chain family. In terms of assembly, F-type ATPases have 2 components, F(1) - the catalytic core - and F(0) - the membrane proton channel. F(1) has five subunits: alpha(3), beta(3), gamma(1), delta(1), epsilon(1). F(0) has three main subunits: a(1), b(2) and c(10-14). The alpha and beta chains form an alternating ring which encloses part of the gamma chain. F(1) is attached to F(0) by a central stalk formed by the gamma and epsilon chains, while a peripheral stalk is formed by the delta and b chains.

The protein localises to the cell membrane. Its function is as follows. F(1)F(0) ATP synthase produces ATP from ADP in the presence of a proton or sodium gradient. F-type ATPases consist of two structural domains, F(1) containing the extramembraneous catalytic core and F(0) containing the membrane proton channel, linked together by a central stalk and a peripheral stalk. During catalysis, ATP synthesis in the catalytic domain of F(1) is coupled via a rotary mechanism of the central stalk subunits to proton translocation. Functionally, this protein is part of the stalk that links CF(0) to CF(1). It either transmits conformational changes from CF(0) to CF(1) or is implicated in proton conduction. The chain is ATP synthase subunit delta from Lactobacillus delbrueckii subsp. bulgaricus (strain ATCC 11842 / DSM 20081 / BCRC 10696 / JCM 1002 / NBRC 13953 / NCIMB 11778 / NCTC 12712 / WDCM 00102 / Lb 14).